We begin with the raw amino-acid sequence, 129 residues long: M-zodatoxin-Lt8g (129 aa).

The N-terminal stretch at 1–20 (MKYFVVALALVAAFACIAES) is a signal peptide. Positions 21–60 (KPAESEHELAEVEEENELADLEDAVWLEHLADLSDLEEAR) are excised as a propeptide. The short motif at 57–60 (EEAR) is the Processing quadruplet motif element.

Post-translationally, cleavage of the propeptide depends on the processing quadruplet motif (XXXR, with at least one of X being E). As to expression, expressed by the venom gland.

The protein resides in the secreted. Its function is as follows. Insecticidal, cytolytic and antimicrobial peptide. Has insecticidal activity against the flesh fly S.carnaria. Has antibacterial activity against the Gram-negative bacteria E.coli. Forms voltage-dependent, ion-permeable channels in membranes. At high concentration causes cell membrane lysis. In Lachesana tarabaevi (Spider), this protein is M-zodatoxin-Lt8g (cit 1-8).